A 2879-amino-acid polypeptide reads, in one-letter code: Peramine synthetase ppzA (2879 aa).

The span at 1 to 12 shows a compositional bias: basic and acidic residues; it reads MTYDEGGHRNNE. A disordered region spans residues 1–52; sequence MTYDEGGHRNNEETPQDVNMSSNNEGMSTSSPTGSYGEIIGQATVSVPQEDQ. Polar residues predominate over residues 16 to 34; it reads QDVNMSSNNEGMSTSSPTG. The interval 351-747 is adenylation 1; that stretch reads QEQCRLQPNT…VGRKDTQVKI (397 aa). Residues 882–958 form the Carrier 1 domain; sequence QPLSDMERLL…DLSRQSKYIE (77 aa). S919 is modified (O-(pantetheine 4'-phosphoryl)serine). The condensation stretch occupies residues 997–1410; sequence DAYPCTPLQE…ITILTTEDLE (414 aa). Residues 1433–1827 form an adenylation 2 region; the sequence is DKVQHRPNAP…LSFVRRKDTT (395 aa). Positions 1958–2050 are methylation (Met) domain; it reads LEIGCGSGMM…KYLVKLIQDI (93 aa). Residues 2370–2448 enclose the Carrier 2 domain; the sequence is WPTTDTGKEL…RLLLDCCCDD (79 aa). An O-(pantetheine 4'-phosphoryl)serine modification is found at S2407. The thiesterase (TE) domain stretch occupies residues 2500–2817; it reads TVLLTGANGF…LEDMLQDLDD (318 aa).

Belongs to the NRP synthetase family. Pantetheine 4'-phosphate is required as a cofactor.

The catalysed reaction is (S)-1-pyrroline-5-carboxylate + L-arginine + S-adenosyl-L-methionine + 2 ATP = peramine + 2 AMP + S-adenosyl-L-homocysteine + 2 diphosphate + H2O + 2 H(+). It functions in the pathway secondary metabolite biosynthesis. Functionally, nonribosomal peptide synthetase; part of the gene cluster that mediates the biosynthesis of pyrrolopyrazines, secondary metabolites showing insecticidal activity. The single multifunctional NRPS ppzA is responsible for the biosynthesis of peramine. The condensation domain of ppzA is proposed to catalyze formation of a peptide bond between 1-pyrroline-5-carboxylate and arginine. The methylation domain of ppzA would catalyze the N-methylation of the alpha-amino group of arginine. The reductase domain is proposed to be responsible for reduction of the thioester and the cyclization to form an iminium ion resulting in release from the peptide synthetase. Deprotonation of this intermediate and oxidation of the pyrroline ring would give rise to peramine. This final oxidation to give the pyrrole functionality may be spontaneous. In Epichloe species that produce only peramine, the peramine synthetase gene is not localized in a gene cluster, in contrast to Metarhizium species that contain additional pyrrolopyrazine biosynthesis genes. The 2-oxoglutarate-Fe(II) type oxidoreductase ppzC hydroxylates peramine to yield the newly identified compound 8-hydroxyperamine whereas ppzD converts L-proline into trans-4-hydroxy-L-proline, a precursor of peramine biosynthesis. The polypeptide is Peramine synthetase ppzA (Metarhizium rileyi (strain RCEF 4871) (Nomuraea rileyi)).